The primary structure comprises 115 residues: Large ribosomal subunit protein bL19 (115 aa).

This sequence belongs to the bacterial ribosomal protein bL19 family.

In terms of biological role, this protein is located at the 30S-50S ribosomal subunit interface and may play a role in the structure and function of the aminoacyl-tRNA binding site. This is Large ribosomal subunit protein bL19 from Lactobacillus delbrueckii subsp. bulgaricus (strain ATCC BAA-365 / Lb-18).